We begin with the raw amino-acid sequence, 215 residues long: Kunitz trypsin inhibitor 4 (215 aa).

An N-terminal signal peptide occupies residues 1–28 (MTKTTKTMNPKFYLVLALTAVLASNAYG). 2 disulfides stabilise this stretch: Cys-66–Cys-112 and Cys-165–Cys-176. An N-linked (GlcNAc...) asparagine glycan is attached at Asn-206.

Belongs to the protease inhibitor I3 (leguminous Kunitz-type inhibitor) family. As to expression, expressed in roots.

It is found in the endoplasmic reticulum. Its function is as follows. Exhibits Kunitz trypsin protease inhibitor activity. Involved in modulating programmed cell death (PCD) in plant-pathogen interactions. Can inhibit both serine proteases and cysteine proteases. May be involved in the modulation of the proteases that participate in the hydrolysis of dietary proteins in the gut of spider mites. This Arabidopsis thaliana (Mouse-ear cress) protein is Kunitz trypsin inhibitor 4.